We begin with the raw amino-acid sequence, 464 residues long: 2-oxoadipate dioxygenase/decarboxylase (464 aa).

2-oxoadipate-binding residues include histidine 70, arginine 74, and histidine 226. Histidine 70 contacts Fe(2+). Fe(2+)-binding residues include histidine 226 and glutamate 294. Valine 402 is a 2-oxoadipate binding site.

It belongs to the 2-oxoadipate dioxygenase/decarboxylase family. Fe(2+) is required as a cofactor.

The catalysed reaction is 2-oxoadipate + O2 = (R)-2-hydroxyglutarate + CO2. It functions in the pathway amino-acid degradation. With respect to regulation, inhibited by EDTA. Functionally, catalyzes the decarboxylation and hydroxylation of 2-oxoadipate (2OA) to form D-2-hydroxyglutarate (D-2-HGA). Is specific for 2-oxoadipate. Is involved in a D-lysine catabolic pathway. In Pseudomonas putida (strain ATCC 47054 / DSM 6125 / CFBP 8728 / NCIMB 11950 / KT2440), this protein is 2-oxoadipate dioxygenase/decarboxylase.